The chain runs to 254 residues: Type III pantothenate kinase (254 aa).

6-13 serves as a coordination point for ATP; the sequence is DVGNTNTV. Substrate contacts are provided by residues Tyr100 and 107–110; that span reads GADR. The active-site Proton acceptor is Asp109. Asp129 is a K(+) binding site. Thr132 lines the ATP pocket. A substrate-binding site is contributed by Thr184.

This sequence belongs to the type III pantothenate kinase family. As to quaternary structure, homodimer. Requires NH4(+) as cofactor. K(+) serves as cofactor.

It is found in the cytoplasm. The enzyme catalyses (R)-pantothenate + ATP = (R)-4'-phosphopantothenate + ADP + H(+). It participates in cofactor biosynthesis; coenzyme A biosynthesis; CoA from (R)-pantothenate: step 1/5. Catalyzes the phosphorylation of pantothenate (Pan), the first step in CoA biosynthesis. This is Type III pantothenate kinase from Halalkalibacterium halodurans (strain ATCC BAA-125 / DSM 18197 / FERM 7344 / JCM 9153 / C-125) (Bacillus halodurans).